Here is a 244-residue protein sequence, read N- to C-terminus: Ribonuclease 3 2 (244 aa).

Residues 11 to 136 enclose the RNase III domain; sequence LKALLRRLGL…LLGALYLSVG (126 aa). Residue Glu-50 coordinates Mg(2+). The active site involves Asp-54. 2 residues coordinate Mg(2+): Asp-122 and Glu-125. Glu-125 is a catalytic residue. The region spanning 164–234 is the DRBM domain; it reads NYKEALQAWT…AQQAYQDFIA (71 aa).

This sequence belongs to the ribonuclease III family. Homodimer. It depends on Mg(2+) as a cofactor.

It localises to the cytoplasm. It carries out the reaction Endonucleolytic cleavage to 5'-phosphomonoester.. Digests double-stranded RNA. Involved in the processing of primary rRNA transcript to yield the immediate precursors to the large and small rRNAs (23S and 16S). Processes some mRNAs, and tRNAs when they are encoded in the rRNA operon. Processes pre-crRNA and tracrRNA of type II CRISPR loci if present in the organism. The polypeptide is Ribonuclease 3 2 (Synechocystis sp. (strain ATCC 27184 / PCC 6803 / Kazusa)).